Consider the following 139-residue polypeptide: Large ribosomal subunit protein bL21 (139 aa).

Belongs to the bacterial ribosomal protein bL21 family. In terms of assembly, part of the 50S ribosomal subunit. Contacts protein L20.

Its function is as follows. This protein binds to 23S rRNA in the presence of protein L20. The polypeptide is Large ribosomal subunit protein bL21 (Prochlorococcus marinus (strain NATL2A)).